The sequence spans 355 residues: WAT1-related protein At1g25270 (355 aa).

Transmembrane regions (helical) follow at residues 4-24 (VVAMVAVQFIFAGMFILFKIT), 33-53 (VLVAYRLSFATIFMLPLALIF), 65-85 (LLLLAFVSGLLGAAIPNILYL), 94-114 (TFSAASSIISPLITLVLGLVF), 134-154 (LLGACGALVFVFYKGIEIHIW), 175-195 (VSILGVLMVLGSNVSTSLWLL), 207-227 (LYWNTSLMNGVGSLVCVIIAL), 244-264 (LLATLYSGIVVSGMVVPLVAW), 272-292 (LFVTVFSPIRLVIVALIGSFA), and 297-317 (LHLGSIIGAMIMVGGVYLVVW). The 131-residue stretch at 12 to 142 (FIFAGMFILF…TLLGACGALV (131 aa)) folds into the EamA 1 domain. In terms of domain architecture, EamA 2 spans 210 to 316 (NTSLMNGVGS…IMVGGVYLVV (107 aa)).

It belongs to the drug/metabolite transporter (DMT) superfamily. Plant drug/metabolite exporter (P-DME) (TC 2.A.7.4) family.

It localises to the membrane. This chain is WAT1-related protein At1g25270, found in Arabidopsis thaliana (Mouse-ear cress).